The primary structure comprises 504 residues: Maturase K (504 aa).

It belongs to the intron maturase 2 family. MatK subfamily.

Its subcellular location is the plastid. It is found in the chloroplast. Functionally, usually encoded in the trnK tRNA gene intron. Probably assists in splicing its own and other chloroplast group II introns. This chain is Maturase K, found in Berzelia lanuginosa (Buttonbush).